A 526-amino-acid chain; its full sequence is ATP synthase subunit alpha (526 aa).

178 to 185 (GDRQTGKT) is a binding site for ATP.

The protein belongs to the ATPase alpha/beta chains family. As to quaternary structure, F-type ATPases have 2 components, CF(1) - the catalytic core - and CF(0) - the membrane proton channel. CF(1) has five subunits: alpha(3), beta(3), gamma(1), delta(1), epsilon(1). CF(0) has four main subunits: a(1), b(1), b'(1) and c(9-12).

It localises to the cell membrane. The catalysed reaction is ATP + H2O + 4 H(+)(in) = ADP + phosphate + 5 H(+)(out). Produces ATP from ADP in the presence of a proton gradient across the membrane. The alpha chain is a regulatory subunit. This chain is ATP synthase subunit alpha, found in Roseiflexus castenholzii (strain DSM 13941 / HLO8).